An 867-amino-acid polypeptide reads, in one-letter code: Rifampicin phosphotransferase (867 aa).

Residues 1 to 314 are ATP-binding; the sequence is MKPYVLKFQE…FYIVQSRPIT (314 aa). ATP contacts are provided by Lys22, Arg117, Gly132, Thr136, Gln183, Glu297, Gln309, and Arg311. The segment at 327–754 is rifampicin-binding; that stretch reads NRVYISVAHQ…TSDGEMINGE (428 aa). 2 residues coordinate rifampicin: Gln336 and Tyr351. Residues 767-865 are swivel phosphohistidine; it reads GLPVSSGTVE…INGTEGYIEI (99 aa). The Tele-phosphohistidine intermediate role is filled by His825.

The protein belongs to the rifampicin phosphotransferase family.

It catalyses the reaction rifampicin + ATP + H2O = 21-phosphorifampicin + AMP + phosphate + 2 H(+). Its function is as follows. Catalyzes the phosphorylation of rifampicin, also known as rifampin (RIF), leading to its inactivation. Confers high level resistance to a variety of clinically used rifamycin antibiotics. Does not show phosphoenolpyruvate (PEP) synthase activity. This chain is Rifampicin phosphotransferase, found in Listeria monocytogenes serotype 4b (strain F2365).